The sequence spans 550 residues: GMP synthase [glutamine-hydrolyzing] (550 aa).

Residues 39 to 232 (RILILDFGSQ…VHKICGCGGL (194 aa)) form the Glutamine amidotransferase type-1 domain. Residue Cys116 is the Nucleophile of the active site. Catalysis depends on residues His206 and Glu208. The GMPS ATP-PPase domain occupies 233 to 425 (WTPEHIIDLR…LGLPHSMIYR (193 aa)). 260–266 (SGGVDSS) serves as a coordination point for ATP.

As to quaternary structure, homodimer.

The catalysed reaction is XMP + L-glutamine + ATP + H2O = GMP + L-glutamate + AMP + diphosphate + 2 H(+). The protein operates within purine metabolism; GMP biosynthesis; GMP from XMP (L-Gln route): step 1/1. Functionally, catalyzes the synthesis of GMP from XMP. The sequence is that of GMP synthase [glutamine-hydrolyzing] from Acinetobacter baylyi (strain ATCC 33305 / BD413 / ADP1).